Consider the following 31-residue polypeptide: Cyclotide vibi-F (31 aa).

The segment at residues 1–31 (GTIPCGESCVFIPCLTSALGCSCKSKVCYKN) is a cross-link (cyclopeptide (Gly-Asn)). 3 disulfides stabilise this stretch: cysteine 5/cysteine 21, cysteine 9/cysteine 23, and cysteine 14/cysteine 28.

In terms of processing, this is a cyclic peptide.

In terms of biological role, probably participates in a plant defense mechanism. The polypeptide is Cyclotide vibi-F (Viola biflora (Yellow wood violet)).